Here is a 380-residue protein sequence, read N- to C-terminus: Cytochrome b (380 aa).

4 helical membrane passes run 34–54 (FGSL…LLAM), 78–99 (WLIR…YLHI), 114–134 (WNTG…GYVL), and 179–199 (FFAL…IHLT). Residues H84 and H98 each contribute to the heme b site. Heme b contacts are provided by H183 and H197. H202 provides a ligand contact to a ubiquinone. The next 4 helical transmembrane spans lie at 227-247 (LKDI…ALFS), 289-309 (LGGV…PFLH), 321-341 (LSQL…WVGS), and 348-368 (FIII…ILFP).

It belongs to the cytochrome b family. The cytochrome bc1 complex contains 11 subunits: 3 respiratory subunits (MT-CYB, CYC1 and UQCRFS1), 2 core proteins (UQCRC1 and UQCRC2) and 6 low-molecular weight proteins (UQCRH/QCR6, UQCRB/QCR7, UQCRQ/QCR8, UQCR10/QCR9, UQCR11/QCR10 and a cleavage product of UQCRFS1). This cytochrome bc1 complex then forms a dimer. Requires heme b as cofactor.

Its subcellular location is the mitochondrion inner membrane. Component of the ubiquinol-cytochrome c reductase complex (complex III or cytochrome b-c1 complex) that is part of the mitochondrial respiratory chain. The b-c1 complex mediates electron transfer from ubiquinol to cytochrome c. Contributes to the generation of a proton gradient across the mitochondrial membrane that is then used for ATP synthesis. The polypeptide is Cytochrome b (MT-CYB) (Daption capense (Cape petrel)).